The sequence spans 1017 residues: Voltage-gated delayed rectifier potassium channel KCNH4 (1017 aa).

Residues 1–232 (MPVMKGLLAP…YSIPKAVWDG (232 aa)) are Cytoplasmic-facing. A PAS domain is found at 14–90 (FLDTIATRFD…QRLQKALEGH (77 aa)). The 53-residue stretch at 93–145 (HRAEICFYRKDGSAFWCLLDMMPIKNELGEVVLFLFSFKDISQSGGPGLGSPG) folds into the PAC domain. Positions 139-170 (PGLGSPGIHGDNNNHENSLGRRGASSRLRSTR) are disordered. The chain crosses the membrane as a helical span at residues 233 to 253 (LILLATFYVAVTVPYNVCFAG). Residues 254 to 262 (DDDTPITSR) are Extracellular-facing. Residues 263-283 (HTLVSDIAVEMLFILDIILNF) form a helical membrane-spanning segment. At 284 to 305 (RTTYVSQSGQVVSAPRSIGLHY) the chain is on the cytoplasmic side. Residues 306-326 (LATWFFVDLIAALPFDLLYVF) traverse the membrane as a helical segment. Residues 327–334 (NITVTSLV) lie on the Extracellular side of the membrane. A helical; Voltage-sensor membrane pass occupies residues 335–355 (HLLKTVRLLRLLRLLQKLERY). Residues 356–364 (SQCSAVVLT) are Cytoplasmic-facing. A helical transmembrane segment spans residues 365–385 (LLMSVFALLAHWMACVWYVIG). Topologically, residues 386-427 (RREMEANDPLLWDIGWLHELGKRLEEPYVNGSAGGPSRRSAY) are extracellular. Residue asparagine 415 is glycosylated (N-linked (GlcNAc...) asparagine). The pore-forming intramembrane region spans 428-448 (IAALYFTLSSLTSVGFGNVCA). Residues 440–445 (SVGFGN) carry the Selectivity filter motif. At 449–454 (NTDAEK) the chain is on the extracellular side. A helical transmembrane segment spans residues 455 to 475 (IFSICTMLIGALMHAVVFGNV). At 476–1017 (TAIIQRMYSR…SFQSGSDTFH (542 aa)) the chain is on the cytoplasmic side. Positions 557-621 (LFGAASRGCL…AILGKGDLIG (65 aa)) are cNMP-binding domain. Disordered regions lie at residues 690 to 749 (GSEN…PNLS) and 771 to 870 (LVSS…ELAT). The segment covering 703–726 (PRLSQARSDTLGSSSDKTLPSITE) has biased composition (polar residues). Composition is skewed to low complexity over residues 771-786 (LVSS…PALA) and 806-820 (PPQL…FGPP). Residues 873 to 907 (AEEVKEKVCRLNQEISRLNQEVSQLSRELRQVMGL) adopt a coiled-coil conformation. The segment at 972–1017 (SELRSSMVPPFPSEPDPLGPSPVPEASPLTPSLLKHSFQSGSDTFH) is disordered. Positions 980 to 996 (PPFPSEPDPLGPSPVPE) are enriched in pro residues. A compositionally biased stretch (polar residues) spans 1008–1017 (SFQSGSDTFH).

The protein belongs to the potassium channel family. H (Eag) (TC 1.A.1.20) subfamily. Kv12.3/KCNH4 sub-subfamily. In terms of assembly, the potassium channel is probably composed of a homo- or heterotetrameric complex of pore-forming alpha subunits that can associate with modulating beta subunits. Highly expressed in adult testis, and in adult and embryonic brain. In adult brain found in piriform cortex, olfactory tubercle, cerebral cortex, hippocampus pyramidial cells and dentate gyrus and basal ganglia of caudate/putamen and accumbens nucleus. Detected at intermediate levels in lung, spinal cord, and pituitary.

It is found in the membrane. The catalysed reaction is K(+)(in) = K(+)(out). Functionally, pore-forming (alpha) subunit of a voltage-gated delayed rectifier. Activates at more negative voltages, exhibits fast prepulse-independent activation kinetics and deactivates much more slowly, but shows no inactivation. The sequence is that of Voltage-gated delayed rectifier potassium channel KCNH4 from Rattus norvegicus (Rat).